We begin with the raw amino-acid sequence, 45 residues long: Putative metallothionein-like protein 1B (45 aa).

It belongs to the metallothionein superfamily. Type 15 family.

In terms of biological role, metallothioneins have a high content of cysteine residues that bind various heavy metals. Confers tolerance to cadmium (Cd) and plays a role in Cd and zinc (Zn) homeostasis. This is Putative metallothionein-like protein 1B (MT1B) from Arabidopsis thaliana (Mouse-ear cress).